The following is a 238-amino-acid chain: Purine nucleoside phosphorylase DeoD-type 1 (238 aa).

Residue histidine 5 participates in a purine D-ribonucleoside binding. Residues glycine 21, arginine 25, arginine 44, and 88-91 (RVGS) each bind phosphate. A purine D-ribonucleoside-binding positions include 180–182 (EME) and 204–205 (SD). Aspartate 205 (proton donor) is an active-site residue.

Belongs to the PNP/UDP phosphorylase family. As to quaternary structure, homohexamer; trimer of homodimers.

The enzyme catalyses a purine D-ribonucleoside + phosphate = a purine nucleobase + alpha-D-ribose 1-phosphate. It carries out the reaction a purine 2'-deoxy-D-ribonucleoside + phosphate = a purine nucleobase + 2-deoxy-alpha-D-ribose 1-phosphate. Catalyzes the reversible phosphorolytic breakdown of the N-glycosidic bond in the beta-(deoxy)ribonucleoside molecules, with the formation of the corresponding free purine bases and pentose-1-phosphate. In Aliivibrio fischeri (strain ATCC 700601 / ES114) (Vibrio fischeri), this protein is Purine nucleoside phosphorylase DeoD-type 1.